We begin with the raw amino-acid sequence, 189 residues long: dCTP deaminase (189 aa).

DCTP-binding positions include 112 to 117, 136 to 138, Gln157, Tyr171, and Gln181; these read KSTYAR and TLE. Glu138 serves as the catalytic Proton donor/acceptor.

It belongs to the dCTP deaminase family. In terms of assembly, homotrimer.

It catalyses the reaction dCTP + H2O + H(+) = dUTP + NH4(+). Its pathway is pyrimidine metabolism; dUMP biosynthesis; dUMP from dCTP (dUTP route): step 1/2. Its function is as follows. Catalyzes the deamination of dCTP to dUTP. The protein is dCTP deaminase of Burkholderia mallei (strain NCTC 10247).